A 172-amino-acid polypeptide reads, in one-letter code: Protein-export protein SecB (172 aa).

It belongs to the SecB family. In terms of assembly, homotetramer, a dimer of dimers. One homotetramer interacts with 1 SecA dimer.

Its subcellular location is the cytoplasm. One of the proteins required for the normal export of preproteins out of the cell cytoplasm. It is a molecular chaperone that binds to a subset of precursor proteins, maintaining them in a translocation-competent state. It also specifically binds to its receptor SecA. The protein is Protein-export protein SecB of Stenotrophomonas maltophilia (strain K279a).